Here is a 335-residue protein sequence, read N- to C-terminus: MMFPGLLAPPAGYPSLLRPTPTLTLPQSLQSAFSGHSSFLVEDLIRISRPPTYLPRSIPTASLSPPRQEAPTALADSGTSDLGSPGSGSRRGSSPQTALSPASEPTFLKFGVNAILSSAPRRETSPALLQSPPPKTFAFPYFEGSFQPFIRSSYFPASSSVVPIPGTFSWPLAARGKPRRGMLRRAVFSDVQRKALEKTFQKQKYISKPDRKKLASKLGLKDSQVKIWFQNRRMKWRNSKERELLSSGGCREQTLPTKLNPHPDLSDVGQKGPGDEEEDSPGASLAYHAPPDPRHLLEGPLPASPAHSSSPGKPSDFSDSDEDEEGEEDEEITVS.

Disordered regions lie at residues 56 to 102 (RSIP…LSPA) and 240 to 335 (KERE…ITVS). Over residues 83 to 95 (GSPGSGSRRGSSP) the composition is skewed to low complexity. Positions 181 to 240 (GMLRRAVFSDVQRKALEKTFQKQKYISKPDRKKLASKLGLKDSQVKIWFQNRRMKWRNSK) form a DNA-binding region, homeobox. The segment covering 299–317 (GPLPASPAHSSSPGKPSDF) has biased composition (low complexity). Positions 318-335 (SDSDEDEEGEEDEEITVS) are enriched in acidic residues.

The protein belongs to the H2.0 homeobox family.

The protein resides in the nucleus. In terms of biological role, could have a role in patterning the central nervous system during embryogenesis. Has a key role in regulating the distinct phenotypic features that distinguish two major classes of ventral interneurons, V0 and V1 neurons. Regulates the transcription factor profile, neurotransmitter phenotype, intraspinal migratory path and axonal trajectory of V0 neurons, features that differentiate them from an adjacent set of V1 neurons. The polypeptide is Homeobox protein DBX1 (Dbx1) (Rattus norvegicus (Rat)).